Here is a 344-residue protein sequence, read N- to C-terminus: Serpentine receptor class delta-3 (344 aa).

7 helical membrane passes run 21-41, 54-74, 102-122, 142-162, 203-223, 259-279, and 287-307; these read IIGYIVNPLGILFNTLLIILI, MLHLNFALCDLFSCLAGMLAL, FLHVFVCHCLAHSQWILMISF, ICILTYLPSLLFVIVYWSDVA, FSAIVYMTIPCFPIYGVIVFF, IVPIFWLTASTFYLLALFQVV, and MPFRIMECMPMITPLISLYFV.

The protein belongs to the nematode receptor-like protein srd family.

The protein resides in the membrane. The chain is Serpentine receptor class delta-3 (srd-3) from Caenorhabditis elegans.